Reading from the N-terminus, the 138-residue chain is Large ribosomal subunit protein mL54 (138 aa).

The transit peptide at 1–16 directs the protein to the mitochondrion; sequence MAARRLFGATGSWARW.

The protein belongs to the mitochondrion-specific ribosomal protein mL54 family. As to quaternary structure, component of the mitochondrial ribosome large subunit (39S) which comprises a 16S rRNA and about 50 distinct proteins.

The protein resides in the mitochondrion. This Bos taurus (Bovine) protein is Large ribosomal subunit protein mL54 (MRPL54).